Consider the following 124-residue polypeptide: uncharacterized protein (124 aa).

This sequence belongs to the asfivirus H124R family.

The protein localises to the virion. This is an uncharacterized protein from Ornithodoros (relapsing fever ticks).